Reading from the N-terminus, the 440-residue chain is Transposon Ty1-BR Gag polyprotein (440 aa).

Composition is skewed to polar residues over residues 1–10 (MESQQLSNYP), 48–60 (TKAN…TPAS), and 127–152 (QSQF…GNTF). Disordered stretches follow at residues 1–93 (MESQ…MMTQ), 126–173 (PQSQ…RPPP), and 352–440 (GSRN…PETY). Low complexity predominate over residues 153-165 (TDSSSADSDMTST). The segment at 299–401 (NNGIHINNKV…NSKSKTARAH (103 aa)) is RNA-binding. Residues 402-418 (NVSTSNNSPSTDNDSIS) show a composition bias toward low complexity. A Phosphoserine modification is found at S416. Residues 419–428 (KSTTEPIQLN) show a composition bias toward polar residues. Residues 429 to 440 (NKHDLHLRPETY) show a composition bias toward basic and acidic residues.

Homotrimer.

The protein localises to the cytoplasm. Capsid protein (CA) is the structural component of the virus-like particle (VLP), forming the shell that encapsulates the retrotransposons dimeric RNA genome. The particles are assembled from trimer-clustered units and there are holes in the capsid shells that allow for the diffusion of macromolecules. CA also has nucleocapsid-like chaperone activity, promoting primer tRNA(i)-Met annealing to the multipartite primer-binding site (PBS), dimerization of Ty1 RNA and initiation of reverse transcription. This is Transposon Ty1-BR Gag polyprotein (TY1A-BR) from Saccharomyces cerevisiae (strain ATCC 204508 / S288c) (Baker's yeast).